The sequence spans 345 residues: Selenide, water dikinase (345 aa).

Cys-16 is an active-site residue. ATP is bound by residues Lys-19 and Thr-46–Asp-48. Residue Asp-49 coordinates Mg(2+). ATP-binding positions include Asp-66, Asp-89, and Gly-136–Thr-138. Asp-89 is a Mg(2+) binding site. Asp-224 contributes to the Mg(2+) binding site.

It belongs to the selenophosphate synthase 1 family. Class I subfamily. Homodimer. Mg(2+) is required as a cofactor.

The enzyme catalyses hydrogenselenide + ATP + H2O = selenophosphate + AMP + phosphate + 2 H(+). Synthesizes selenophosphate from selenide and ATP. This Clostridium botulinum (strain Eklund 17B / Type B) protein is Selenide, water dikinase.